Reading from the N-terminus, the 147-residue chain is SsrA-binding protein (147 aa).

The tract at residues 119–147 (AKGKKQHDKRESEKQKEWERDKQRLMRPK) is disordered. Basic and acidic residues predominate over residues 126–147 (DKRESEKQKEWERDKQRLMRPK).

Belongs to the SmpB family.

The protein localises to the cytoplasm. Functionally, required for rescue of stalled ribosomes mediated by trans-translation. Binds to transfer-messenger RNA (tmRNA), required for stable association of tmRNA with ribosomes. tmRNA and SmpB together mimic tRNA shape, replacing the anticodon stem-loop with SmpB. tmRNA is encoded by the ssrA gene; the 2 termini fold to resemble tRNA(Ala) and it encodes a 'tag peptide', a short internal open reading frame. During trans-translation Ala-aminoacylated tmRNA acts like a tRNA, entering the A-site of stalled ribosomes, displacing the stalled mRNA. The ribosome then switches to translate the ORF on the tmRNA; the nascent peptide is terminated with the 'tag peptide' encoded by the tmRNA and targeted for degradation. The ribosome is freed to recommence translation, which seems to be the essential function of trans-translation. This Nitrosospira multiformis (strain ATCC 25196 / NCIMB 11849 / C 71) protein is SsrA-binding protein.